We begin with the raw amino-acid sequence, 81 residues long: UPF0180 protein ABC2430 (81 aa).

Belongs to the UPF0180 family.

The protein is UPF0180 protein ABC2430 of Shouchella clausii (strain KSM-K16) (Alkalihalobacillus clausii).